The sequence spans 100 residues: ATP phosphoribosyltransferase (100 aa).

This sequence belongs to the ATP phosphoribosyltransferase family. Long subfamily. As to quaternary structure, equilibrium between an active dimeric form, an inactive hexameric form and higher aggregates. Interconversion between the various forms is largely reversible and is influenced by the natural substrates and inhibitors of the enzyme. Requires Mg(2+) as cofactor.

It localises to the cytoplasm. The catalysed reaction is 1-(5-phospho-beta-D-ribosyl)-ATP + diphosphate = 5-phospho-alpha-D-ribose 1-diphosphate + ATP. It functions in the pathway amino-acid biosynthesis; L-histidine biosynthesis; L-histidine from 5-phospho-alpha-D-ribose 1-diphosphate: step 1/9. Its activity is regulated as follows. Feedback inhibited by histidine. Functionally, catalyzes the condensation of ATP and 5-phosphoribose 1-diphosphate to form N'-(5'-phosphoribosyl)-ATP (PR-ATP). Has a crucial role in the pathway because the rate of histidine biosynthesis seems to be controlled primarily by regulation of HisG enzymatic activity. The polypeptide is ATP phosphoribosyltransferase (hisG) (Klebsiella pneumoniae).